The chain runs to 719 residues: Polyphosphate kinase (719 aa).

Asparagine 54 contacts ATP. Mg(2+)-binding residues include arginine 379 and arginine 409. One can recognise a PLD phosphodiesterase domain in the interval 434–468; sequence THLKTHSKIALVVKRMNNKLTSFIHLGTGNYNDKT. Histidine 439 serves as the catalytic Phosphohistidine intermediate. ATP contacts are provided by tyrosine 472, arginine 568, and histidine 596.

Belongs to the polyphosphate kinase 1 (PPK1) family. Mg(2+) serves as cofactor. In terms of processing, an intermediate of this reaction is the autophosphorylated ppk in which a phosphate is covalently linked to a histidine residue through a N-P bond.

The enzyme catalyses [phosphate](n) + ATP = [phosphate](n+1) + ADP. Functionally, catalyzes the reversible transfer of the terminal phosphate of ATP to form a long-chain polyphosphate (polyP). The polypeptide is Polyphosphate kinase (Staphylococcus saprophyticus subsp. saprophyticus (strain ATCC 15305 / DSM 20229 / NCIMB 8711 / NCTC 7292 / S-41)).